A 130-amino-acid polypeptide reads, in one-letter code: Small ribosomal subunit protein uS8 (130 aa).

This sequence belongs to the universal ribosomal protein uS8 family. As to quaternary structure, part of the 30S ribosomal subunit. Contacts proteins S5 and S12.

Its function is as follows. One of the primary rRNA binding proteins, it binds directly to 16S rRNA central domain where it helps coordinate assembly of the platform of the 30S subunit. This chain is Small ribosomal subunit protein uS8, found in Cereibacter sphaeroides (strain KD131 / KCTC 12085) (Rhodobacter sphaeroides).